Reading from the N-terminus, the 283-residue chain is Thymidylate synthase (283 aa).

Residue arginine 22 coordinates dUMP. Cysteine 160 acts as the Nucleophile in catalysis. DUMP-binding positions include 180–183 (RSCD), asparagine 191, and 221–223 (HIY). Aspartate 183 is a binding site for (6R)-5,10-methylene-5,6,7,8-tetrahydrofolate. Residue serine 282 participates in (6R)-5,10-methylene-5,6,7,8-tetrahydrofolate binding.

This sequence belongs to the thymidylate synthase family. Bacterial-type ThyA subfamily. Homodimer.

The protein resides in the cytoplasm. The catalysed reaction is dUMP + (6R)-5,10-methylene-5,6,7,8-tetrahydrofolate = 7,8-dihydrofolate + dTMP. The protein operates within pyrimidine metabolism; dTTP biosynthesis. In terms of biological role, catalyzes the reductive methylation of 2'-deoxyuridine-5'-monophosphate (dUMP) to 2'-deoxythymidine-5'-monophosphate (dTMP) while utilizing 5,10-methylenetetrahydrofolate (mTHF) as the methyl donor and reductant in the reaction, yielding dihydrofolate (DHF) as a by-product. This enzymatic reaction provides an intracellular de novo source of dTMP, an essential precursor for DNA biosynthesis. This chain is Thymidylate synthase, found in Vibrio vulnificus (strain YJ016).